Here is a 384-residue protein sequence, read N- to C-terminus: Beta-glucuronosyltransferase GlcAT14C (384 aa).

The Cytoplasmic segment spans residues 1-11 (MKRSHISSPRS). Residues 12–34 (YSRPAISIFGVFLLFLLVLTLSS) traverse the membrane as a signal-anchor for type II membrane protein segment. Residues 35 to 384 (RKPSDSSSGL…HENFRAKQCK (350 aa)) lie on the Lumenal side of the membrane. 3 N-linked (GlcNAc...) asparagine glycosylation sites follow: Asn-156, Asn-285, and Asn-306.

This sequence belongs to the glycosyltransferase 14 family.

It is found in the golgi apparatus membrane. Its function is as follows. Beta-glucuronosyltransferase involved in the biosynthesis of type II arabinogalactan (AG). Modifies both the beta-1,6-linked galactan and beta-1,3-linked galactan present in type II AG. This Arabidopsis thaliana (Mouse-ear cress) protein is Beta-glucuronosyltransferase GlcAT14C.